The primary structure comprises 325 residues: MTFIGVDHGTTAMRFALIEDEKVLTFELGRAEAAAMSEKEILAAIEREFGIRIGDIDLVALTYSMGDGFSAIKDVRKLEGRGLQSIEGAGKKTGGGTRVFDAVRNSEIPAIAIPGLHSGSRVDPRMKVFSHLTSPEKLGIAYHILCLGYEDFVVSDISSNTVTLAVVAGKVIGAIDACIFAPGVHHGPLDLQAIRNVDDRLQTANQAFIEAGTLKMTPYKDREELLKAAGKGEKPALLALDTIALFAAMEIASMQLLMKDYGTTGTVFLAGSVGEVEYVQKKICTHLDQECLSLGKWHAAIGCAEIARDVSAGKKQILGVNVDYP.

Belongs to the UPF0285 family.

The chain is UPF0285 protein MA_3856 from Methanosarcina acetivorans (strain ATCC 35395 / DSM 2834 / JCM 12185 / C2A).